A 219-amino-acid chain; its full sequence is RPA-interacting protein (219 aa).

Ser18 is modified (phosphoserine). An RIP-type zinc finger spans residues 137–212 (CPVCIKYNLR…PSLLMNCLTC (76 aa)). Positions 164–180 (STDLTEQKLRACLEENV) are mediates nuclear export.

In terms of assembly, interacts with the RPA1 subunit of RPA complex. In terms of processing, sumoylated; required for localization in the nuclear PML body and transport of RPA complex in PML body. Upon UV irradiation and during S phase, it is desumoylated, releasing RPA complex that is translocated to sites of DNA damage. Sumoylation takes place at different Lys residues.

The protein localises to the nucleus. Functionally, mediates the import of RPA complex into the nucleus, possibly via some interaction with importin beta. Sumoylation mediates the localization of RPA complex into the PML body of the nucleus, thereby participating in RPA function in DNA metabolism. In Mus musculus (Mouse), this protein is RPA-interacting protein (Rpain).